The primary structure comprises 417 residues: Actin-like protein 7B (417 aa).

The tract at residues 1–39 (MATKNNPSPKPMGTAQGDPGEAGTLPAPEAGIRDTGSTQ) is disordered. The residue at position 8 (Ser8) is a Phosphoserine.

It belongs to the actin family.

The protein localises to the cytoplasm. Its subcellular location is the cytoskeleton. This Rattus norvegicus (Rat) protein is Actin-like protein 7B (Actl7b).